Reading from the N-terminus, the 402-residue chain is WAT1-related protein At5g07050 (402 aa).

The next 10 membrane-spanning stretches (helical) occupy residues 20 to 40 (FAMI…KISL), 48 to 68 (VLVV…AFFF), 74 to 94 (PKIT…GPVI), 109 to 129 (TFSC…AVLF), 149 to 169 (VVTV…VELF), 196 to 216 (FLKG…LFVL), 229 to 249 (LSLT…VTFV), 266 to 286 (LAAA…QGIV), 293 to 313 (VFAT…GSFV), and 318 to 338 (IFLG…AVLW). 2 EamA domains span residues 29 to 159 (YAGM…MLMT) and 208 to 337 (LAWA…YAVL).

This sequence belongs to the drug/metabolite transporter (DMT) superfamily. Plant drug/metabolite exporter (P-DME) (TC 2.A.7.4) family.

Its subcellular location is the membrane. The sequence is that of WAT1-related protein At5g07050 from Arabidopsis thaliana (Mouse-ear cress).